The chain runs to 182 residues: Sperm acrosome-associated protein 7 (182 aa).

Residues 1 to 24 (MAANRGSRTFLSVFLLCCWQGAEL) form the signal peptide. The N-linked (GlcNAc...) asparagine glycan is linked to N40. The segment covering 112–140 (LPTKEESGKNDRSTVANLHDHSSQTKHEP) has biased composition (basic and acidic residues). The interval 112-154 (LPTKEESGKNDRSTVANLHDHSSQTKHEPPSSPEGKGSSNDDV) is disordered.

Testis-specific. Expressed in zygotene and pachytene spermatocytes, round spermatids, elongating spermatids and spermatozoa (at protein level). Testis-specific.

Its subcellular location is the secreted. The protein localises to the cytoplasmic vesicle. The protein resides in the secretory vesicle. It localises to the acrosome lumen. Involved in fertilization. Seems not to play a direct role in sperm-egg binding or gamete fusion. This is Sperm acrosome-associated protein 7 from Mus musculus (Mouse).